The primary structure comprises 397 residues: Chorismate synthase (397 aa).

NADP(+) contacts are provided by Arg40 and Arg46. Residues 129–131 (RSS), 257–258 (QA), Gly302, 317–321 (KPISS), and Arg343 contribute to the FMN site.

Belongs to the chorismate synthase family. Homotetramer. It depends on FMNH2 as a cofactor.

It catalyses the reaction 5-O-(1-carboxyvinyl)-3-phosphoshikimate = chorismate + phosphate. The protein operates within metabolic intermediate biosynthesis; chorismate biosynthesis; chorismate from D-erythrose 4-phosphate and phosphoenolpyruvate: step 7/7. Functionally, catalyzes the anti-1,4-elimination of the C-3 phosphate and the C-6 proR hydrogen from 5-enolpyruvylshikimate-3-phosphate (EPSP) to yield chorismate, which is the branch point compound that serves as the starting substrate for the three terminal pathways of aromatic amino acid biosynthesis. This reaction introduces a second double bond into the aromatic ring system. In Chlorobium phaeovibrioides (strain DSM 265 / 1930) (Prosthecochloris vibrioformis (strain DSM 265)), this protein is Chorismate synthase.